The sequence spans 307 residues: Dioxygenase cdmD (307 aa).

H146, D148, and H226 together coordinate Fe cation.

The protein belongs to the PhyH family. Homodimer. Requires Fe cation as cofactor.

It catalyses the reaction verruculide A + 2-oxoglutarate + O2 = chrodrimanin T + succinate + CO2. It carries out the reaction chrodrimanin E + 2-oxoglutarate + O2 = chrodrimanin A + succinate + CO2. The protein operates within secondary metabolite biosynthesis; terpenoid biosynthesis. In terms of biological role, dioxygenase; part of the gene cluster that mediates the biosynthesis of chrodrimanin B, a meroterpenoid that acts as a potent blocker of insect GABA-gated chloride channels. The first step of the pathway is the biosynthesis of 6-hydroxymellein by the polyketide synthase cdmE. The prenyltransferase cdmH acts as a 6-hydroxymellein 5-farnesyltransferase and produces the hydrophobic metabolite verruculide C. The FAD-dependent monooxygenase cdmI further converts verruculide C into verruculide B. The terpene cyclase cdmG then produced the pentacyclic molecule 3-hydroxypentacecilide A, the backbone structure of chrodrimanin B, via folding the farnesyl moiety of the substrate into the chair-boat conformation. The short-chain dehydrogenase/reductase cdmF functions as the 3-OH dehydrogenase that oxidizes the C-3 hydroxyl group of 3-hydroxypentacecilide A and produces chrodrimanin C, the dehydrogenated product of 3-hydroxypentacecilide A. The cytochrome P450 monooxygenase cdmJ then accepts both 3-hydroxypentacecilide A and chrodrimanin C and functions as a C-7-beta-hydroxylase to produce respectively chrodrimanin H and chrodrimanin F. The dioxygenase cdmA accepts chrodrimanin H to afford chrodrimanin E, which is further transformed to chrodrimanin A by the dioxygenase cdmD. CdmA can also accept chrodrimanin C as substrate to convert it into verruculide A, which is further converted into chrodrimanin T by cdmD. The last step of the biosynthesis is proposed to be performed by the acetyltransferase cdmC which acetylates chrodrimanin A to yield chrodrimanin B. The pathway may also lead to the production of additional shunt products, including chrodrimanins T and U. In Talaromyces verruculosus (Penicillium verruculosum), this protein is Dioxygenase cdmD.